A 179-amino-acid chain; its full sequence is Large ribosomal subunit protein uL5 (179 aa).

The protein belongs to the universal ribosomal protein uL5 family. In terms of assembly, part of the 50S ribosomal subunit; part of the 5S rRNA/L5/L18/L25 subcomplex. Contacts the 5S rRNA and the P site tRNA. Forms a bridge to the 30S subunit in the 70S ribosome.

Its function is as follows. This is one of the proteins that bind and probably mediate the attachment of the 5S RNA into the large ribosomal subunit, where it forms part of the central protuberance. In the 70S ribosome it contacts protein S13 of the 30S subunit (bridge B1b), connecting the 2 subunits; this bridge is implicated in subunit movement. Contacts the P site tRNA; the 5S rRNA and some of its associated proteins might help stabilize positioning of ribosome-bound tRNAs. In Pelobacter propionicus (strain DSM 2379 / NBRC 103807 / OttBd1), this protein is Large ribosomal subunit protein uL5.